The following is a 194-amino-acid chain: Bis(5'-nucleosyl)-tetraphosphatase, symmetrical (194 aa).

The HD domain maps to 18-132 (RYNHSLRVAE…IFIADYIEPG (115 aa)). His21 is a binding site for ADP. His21, His50, and Asp51 together coordinate Fe cation. Residues 51-54 (DFCK), His83, 109-110 (HT), Asp127, Arg133, and 172-177 (TVYNKT) each bind ADP. Fe cation is bound at residue Asp127.

It belongs to the Ap4A hydrolase YqeK family. As to quaternary structure, homodimer.

The catalysed reaction is P(1),P(4)-bis(5'-adenosyl) tetraphosphate + H2O = 2 ADP + 2 H(+). Inhibited by EDTA. In terms of biological role, hydrolyzes diadenosine 5',5'''-P1,P4-tetraphosphate (Ap4A) to yield ADP. Can also hydrolyze Ap3A, Ap5A, Ap4G, Ap4U and Gp4G, always releasing ADP or GDP as one of the products, but it exhibits a marked preference for Ap4A, which is mainly exerted at the substrate affinity level. This is Bis(5'-nucleosyl)-tetraphosphatase, symmetrical from Staphylococcus aureus (strain NCTC 8325 / PS 47).